The chain runs to 133 residues: Small ribosomal subunit protein uS8 (133 aa).

This sequence belongs to the universal ribosomal protein uS8 family. In terms of assembly, part of the 30S ribosomal subunit. Contacts proteins S5 and S12.

One of the primary rRNA binding proteins, it binds directly to 16S rRNA central domain where it helps coordinate assembly of the platform of the 30S subunit. The polypeptide is Small ribosomal subunit protein uS8 (Synechocystis sp. (strain ATCC 27184 / PCC 6803 / Kazusa)).